A 267-amino-acid chain; its full sequence is LysM and putative peptidoglycan-binding domain-containing protein 4 (267 aa).

Residues 1–211 (MRRGDPPPRA…RSNGADWGIQ (211 aa)) are Extracellular-facing. The interval 30–64 (HRQEEPEASSEDEELNVMELRPRSRDSSSKEKEGV) is disordered. The span at 35–45 (PEASSEDEELN) shows a compositional bias: acidic residues. Over residues 49 to 64 (LRPRSRDSSSKEKEGV) the composition is skewed to basic and acidic residues. The LysM domain maps to 70–114 (LERDISHEDNLSKLALQYGCKVADIKRVNNLFQEQDMYALKSIKI). N-linked (GlcNAc...) asparagine glycosylation is present at N79. The disordered stretch occupies residues 130-152 (RTPQQRPSHDAAPSNSAMASVSG). Positions 142 to 152 (PSNSAMASVSG) are enriched in polar residues. A helical transmembrane segment spans residues 212–232 (WWNAVIAMLLIGIVLPIFYVV). At 233–267 (YYKTKDSGESAVDNVGVNISVSTSNSTREYNGKSP) the chain is on the cytoplasmic side.

It is found in the membrane. The polypeptide is LysM and putative peptidoglycan-binding domain-containing protein 4 (lysmd4) (Danio rerio (Zebrafish)).